A 737-amino-acid polypeptide reads, in one-letter code: MSRSTVLGWCTQSCRLLQKHDHSFSFPTFNGSPPLKKRRFCDSAAPAAPRPSIHRPSEYIPHSKSGGEAPQDLGHKAREKEAEKEFYLSLLCSASTKREAKSYLSRFKAQKTTANDGCQHITPRRGDLISDLELMKDKPGVNLGSMFSETRTVAETPAPKQEWSSAQSTELFREKIHVALVKLRKPQLLDDQTLHGVAKTLVQLSRLGMSCCIVIDVGTDKDETHRRIIAREQADRLSAVIDANHGPDSRQLDSIITVPSATDMKLSVLSRGPLLSPLQQGHVVVVVPVGYANDTQRAVLLPANEVVFALSKELAGLELRSGPDEDATTTANKVNDMQKQVSLDRIIILDPAGGIPSLQRRPHVFINLEQEFEDIARELSLGSQTGFLSINDSGTASHKMPVSSLGKSNPISIFVEEELVSLPKTLGESQEMPRNGKRFAEHLENLNLLQRTLSYLPPSSSGIIVTPHEVALSAKGPLNTSAVSAVRTRRQRNPLIHNLLTDKPFQSASLPLGRLGVKSDCMSAGQSPATHSTFVKRGMPLTMLPDPRVEVWAAKKRGEPALTLDDPRIDLPRLIHLIEDSFGRKLDARHYVDRINPRLAGLIIAGEYEGGAVLTWETPPGLSDDGSEEFRARMVPYLDKFAVLKRSQGAGGVADIVFNAMVRTCFPQGVCWRSRANNPVNKWYFERSRGTWKLPGTNWTMFWTTAGVPENQSRFWDYEGVCRAIEPSWADKTQQAD.

A mitochondrion-targeting transit peptide spans 1–47 (MSRSTVLGWCTQSCRLLQKHDHSFSFPTFNGSPPLKKRRFCDSAAPA). The interval 43–78 (SAAPAAPRPSIHRPSEYIPHSKSGGEAPQDLGHKAR) is disordered. Positions 558–727 (GEPALTLDDP…YEGVCRAIEP (170 aa)) constitute an N-acetyltransferase domain.

This sequence belongs to the acetyltransferase family.

The protein resides in the mitochondrion. It carries out the reaction L-glutamate + acetyl-CoA = N-acetyl-L-glutamate + CoA + H(+). It participates in amino-acid biosynthesis; L-arginine biosynthesis; N(2)-acetyl-L-ornithine from L-glutamate: step 1/4. In terms of biological role, N-acetylglutamate synthase involved in arginine biosynthesis. The protein is Amino-acid acetyltransferase, mitochondrial (ARG2) of Coccidioides immitis (strain RS) (Valley fever fungus).